The primary structure comprises 1413 residues: Zinc finger SWIM domain-containing protein 8 (1413 aa).

Phosphoserine occurs at positions 36, 48, and 53. The interval 45 to 65 (RKQSAGPNSPTGGGGGGGSGG) is disordered. The segment covering 55 to 65 (TGGGGGGGSGG) has biased composition (gly residues). The segment at 172–208 (YNVAVMFDRCRVTSCSCTCGAGAKWCTHVVALCLFRI) adopts an SWIM-type zinc-finger fold. The segment at 600–817 (ESQTHKPQTL…ESHAPHVPNQ (218 aa)) is disordered. Over residues 604–625 (HKPQTLSSFYSSSRPATASQRS) the composition is skewed to polar residues. The segment covering 704-715 (SRGGYNGRGWGS) has biased composition (gly residues). Position 724 is a phosphothreonine (threonine 724). Residues 729–744 (IDSSAPETTSDSSPTL) are compositionally biased toward polar residues. Phosphoserine is present on residues serine 738, serine 741, and serine 745. Residues 759 to 794 (GRGQDSDSISSSSSDSLGSSSSSGSRRASASGGARA) show a composition bias toward low complexity. Residues 795–811 (KTVEVGRYKGRRPESHA) are compositionally biased toward basic and acidic residues. Residues serine 852 and serine 1412 each carry the phosphoserine modification.

It belongs to the ZSWIM8 family. In terms of assembly, component of the SCF-like E3 ubiquitin-protein ligase complex which contains CUL3, RBX1, ELOB, ELOC and ZSWIM8. Interacts with DAB1.

The protein localises to the cytoplasm. It is found in the cytosol. It functions in the pathway protein modification; protein ubiquitination. Functionally, substrate recognition component of a SCF-like E3 ubiquitin-protein ligase complex that promotes target-directed microRNA degradation (TDMD), a process that mediates degradation of microRNAs (miRNAs). The SCF-like E3 ubiquitin-protein ligase complex acts by catalyzing ubiquitination and subsequent degradation of AGO proteins (AGO1, AGO2, AGO3 and/or AGO4), thereby exposing miRNAs for degradation. Specifically recognizes and binds AGO proteins when they are engaged with a TDMD target. May also acts as a regulator of axon guidance: specifically recognizes misfolded ROBO3 and promotes its ubiquitination and subsequent degradation. Plays an essential role for proper embryonic development of heart and lung. Controls protein quality of DAB1, a key signal molecule for brain development, thus protecting its signaling strength. Mechanistically, recognizes intrinsically disordered regions of DAB1 and eliminates misfolded DAB1 that cannot be properly phosphorylated. This Bos taurus (Bovine) protein is Zinc finger SWIM domain-containing protein 8.